The primary structure comprises 321 residues: Peroxidase 5 (321 aa).

A signal peptide spans 1–24; it reads MERFSLRFVLMMVSIILTSSICQA. At Gln-25 the chain carries Pyrrolidone carboxylic acid. 4 cysteine pairs are disulfide-bonded: Cys-35–Cys-115, Cys-68–Cys-73, Cys-121–Cys-317, and Cys-201–Cys-227. His-66 functions as the Proton acceptor in the catalytic mechanism. Ca(2+)-binding residues include Asp-67, Val-70, Gly-72, Asp-74, and Ser-76. Residue Pro-164 coordinates substrate. His-194 is a heme b binding site. Thr-195 is a Ca(2+) binding site. An N-linked (GlcNAc...) asparagine glycan is attached at Asn-211. Residues Asp-240, Thr-243, and Asp-248 each coordinate Ca(2+). N-linked (GlcNAc...) asparagine glycosylation is present at Asn-285.

Belongs to the peroxidase family. Classical plant (class III) peroxidase subfamily. The cofactor is heme b. Ca(2+) is required as a cofactor.

Its subcellular location is the secreted. The catalysed reaction is 2 a phenolic donor + H2O2 = 2 a phenolic radical donor + 2 H2O. Its function is as follows. Removal of H(2)O(2), oxidation of toxic reductants, biosynthesis and degradation of lignin, suberization, auxin catabolism, response to environmental stresses such as wounding, pathogen attack and oxidative stress. These functions might be dependent on each isozyme/isoform in each plant tissue. The polypeptide is Peroxidase 5 (PER5) (Arabidopsis thaliana (Mouse-ear cress)).